The following is a 158-amino-acid chain: MPHSTLLLCVIGLLAFSSACYIQNCPRGGKRALQDTGIRQCMTCGPGDQGHCFGPSICCGEGLGCWMGSPETARCFEENYLPTPCQTGGRPCGSDAGRCAAPGVCCDSESCVLDPDCLSESRYHSPADHSAGATSDSPGELLLRLLHFATRGQSEYKQ.

The signal sequence occupies residues 1 to 19; sequence MPHSTLLLCVIGLLAFSSA. Residues C20 and C25 are joined by a disulfide bond. Position 28 is a glycine amide (G28). Intrachain disulfides connect C41-C85, C44-C58, C52-C75, C59-C65, C92-C105, C99-C117, and C106-C111.

Belongs to the vasopressin/oxytocin family. Post-translationally, seven disulfide bonds are present in neurophysin.

It localises to the secreted. In terms of biological role, vasotocin is an antidiuretic hormone. This Oncorhynchus keta (Chum salmon) protein is Vasotocin-neurophysin VT 2.